Here is a 591-residue protein sequence, read N- to C-terminus: Isocitrate dehydrogenase kinase/phosphatase (591 aa).

Residues 315 to 321 (APGVKGM) and Lys-336 contribute to the ATP site. Asp-371 is an active-site residue.

The protein belongs to the AceK family.

The protein localises to the cytoplasm. The enzyme catalyses L-seryl-[isocitrate dehydrogenase] + ATP = O-phospho-L-seryl-[isocitrate dehydrogenase] + ADP + H(+). Functionally, bifunctional enzyme which can phosphorylate or dephosphorylate isocitrate dehydrogenase (IDH) on a specific serine residue. This is a regulatory mechanism which enables bacteria to bypass the Krebs cycle via the glyoxylate shunt in response to the source of carbon. When bacteria are grown on glucose, IDH is fully active and unphosphorylated, but when grown on acetate or ethanol, the activity of IDH declines drastically concomitant with its phosphorylation. The polypeptide is Isocitrate dehydrogenase kinase/phosphatase (Pectobacterium carotovorum subsp. carotovorum (strain PC1)).